The following is an 86-amino-acid chain: RQC P-site tRNA stabilizing factor (86 aa).

The S4 RNA-binding domain occupies 1-62; it reads MRLDKFLKVS…QKLVTVQVNE (62 aa).

This sequence belongs to the RqcP family. Associates with stalled 50S ribosomal subunits. Binds to RqcH, 23S rRNA and the P-site tRNA. Does not require RqcH for association with 50S subunits. Crystallized 50S subunits are variously associated with an A/P-site tRNA with or without RqcH, as well as with P- and E-site tRNAs but no RqcH. Displaced from the 50S subunit by puromycin but not thiostrepton.

Key component of the ribosome quality control system (RQC), a ribosome-associated complex that mediates the extraction of incompletely synthesized nascent chains from stalled ribosomes and their subsequent degradation. RqcH recruits Ala-charged tRNA, and with RqcP directs the elongation of stalled nascent chains on 50S ribosomal subunits, leading to non-templated C-terminal alanine extensions (Ala tail). The Ala tail promotes nascent chain degradation. RqcP is associated with the translocation-like movement of the peptidyl-tRNA from the A-site into the P-site. RqcH, RqcP and charged tRNA(Ala) are necessary and sufficient to add an Ala tail to a model stalled nascent peptide; does not add Val. In Bacillus subtilis (strain 168), this protein is RQC P-site tRNA stabilizing factor.